Here is a 133-residue protein sequence, read N- to C-terminus: Small ribosomal subunit protein uS8 (133 aa).

This sequence belongs to the universal ribosomal protein uS8 family. In terms of assembly, part of the 30S ribosomal subunit. Contacts proteins S5 and S12.

Functionally, one of the primary rRNA binding proteins, it binds directly to 16S rRNA central domain where it helps coordinate assembly of the platform of the 30S subunit. The protein is Small ribosomal subunit protein uS8 of Trichormus variabilis (strain ATCC 29413 / PCC 7937) (Anabaena variabilis).